The chain runs to 206 residues: Transmembrane 4 L6 family member 19 (206 aa).

Residues 1 to 16 are Cytoplasmic-facing; it reads MLSFSRVVNCSRTCSR. A helical membrane pass occupies residues 17–37; it reads FLGLSLGTASLCAAGANIALL. Residues 38–54 lie on the Extracellular side of the membrane; it reads FPNWDVTYLMRGLIGKH. The helical transmembrane segment at 55-75 threads the bilayer; that stretch reads AMLGSGLWGGGLMVLLAATLI. Residues 76-89 lie on the Cytoplasmic side of the membrane; it reads SMTGSFSKSAPCLQ. Residues 90–110 traverse the membrane as a helical segment; that stretch reads VLIALLSSGLALLGAVICFVT. The Extracellular segment spans residues 111 to 171; the sequence is SGVALKDGPF…PSKAVVWHVA (61 aa). Asn129 is a glycosylation site (N-linked (GlcNAc...) asparagine). Residues 172–192 form a helical membrane-spanning segment; sequence FFSILLCISLLQLLLVAIHLV. Residues 182-192 form an important for homodimerization region; that stretch reads LQLLLVAIHLV. The Cytoplasmic portion of the chain corresponds to 193-206; sequence NSILGLFCSFCEKH.

The protein belongs to the L6 tetraspanin family. May form homodimers and homooligomers. Interacts with integrins ITGAV and ITGB3. Interacts with components of members of the V0 complex of vacuolar(H+)-ATPase (V-ATPase), including ATP6V0B and ATP6V0D2; this interaction inhibits V1-V0 complex assembly. As to expression, predominantly expressed in osteoclasts (at protein level). Also expressed in white adipose tissue, as well as in bone marrow-derived macrophages.

Its subcellular location is the lysosome membrane. It is found in the cytoplasm. The protein localises to the cytoskeleton. It localises to the cell projection. The protein resides in the filopodium. Functionally, negatively regulates vacuolar (H+)-ATPase (V-ATPase) activity by interacting with members of V-ATPase V0 complex and hence inhibiting V1-V0 assembly. Required for multinucleation during osteoclast differentiation. The protein is Transmembrane 4 L6 family member 19 (Tm4sf19) of Mus musculus (Mouse).